Consider the following 179-residue polypeptide: Gamma-crystallin S (179 aa).

Ser-2 carries the N-acetylserine modification. Residues 2-5 (SKTG) are N-terminal arm. Beta/gamma crystallin 'Greek key' domains are found at residues 6-44 (TKIT…RVEG) and 45-87 (GTWA…RALH). Residues 88–93 (LSSGGQ) are connecting peptide. 2 consecutive Beta/gamma crystallin 'Greek key' domains span residues 94 to 134 (YKIQ…KVLD) and 135 to 177 (GAWI…RRIV).

The protein belongs to the beta/gamma-crystallin family. As to quaternary structure, monomer.

Crystallins are the dominant structural components of the vertebrate eye lens. In Oryctolagus cuniculus (Rabbit), this protein is Gamma-crystallin S (CRYGS).